A 512-amino-acid chain; its full sequence is ATP synthase subunit beta 2 (512 aa).

ATP is bound at residue 174–181 (GGAGVGKT). Basic and acidic residues predominate over residues 479 to 494 (RRKEEAAREADARRDA). The segment at 479–512 (RRKEEAAREADARRDAAAGAASGSAGPQGAQHGR) is disordered.

Belongs to the ATPase alpha/beta chains family. As to quaternary structure, F-type ATPases have 2 components, CF(1) - the catalytic core - and CF(0) - the membrane proton channel. CF(1) has five subunits: alpha(3), beta(3), gamma(1), delta(1), epsilon(1). CF(0) has three main subunits: a(1), b(2) and c(9-12). The alpha and beta chains form an alternating ring which encloses part of the gamma chain. CF(1) is attached to CF(0) by a central stalk formed by the gamma and epsilon chains, while a peripheral stalk is formed by the delta and b chains.

It localises to the cell inner membrane. It carries out the reaction ATP + H2O + 4 H(+)(in) = ADP + phosphate + 5 H(+)(out). Produces ATP from ADP in the presence of a proton gradient across the membrane. The catalytic sites are hosted primarily by the beta subunits. The protein is ATP synthase subunit beta 2 of Burkholderia thailandensis (strain ATCC 700388 / DSM 13276 / CCUG 48851 / CIP 106301 / E264).